The chain runs to 546 residues: Thermosome subunit beta (546 aa).

The protein belongs to the TCP-1 chaperonin family. As to quaternary structure, forms a Heterooligomeric complex of two stacked eight-membered rings.

Molecular chaperone; binds unfolded polypeptides in vitro, and has a weak ATPase activity. This Thermococcus kodakarensis (strain ATCC BAA-918 / JCM 12380 / KOD1) (Pyrococcus kodakaraensis (strain KOD1)) protein is Thermosome subunit beta (thsB).